A 153-amino-acid chain; its full sequence is Putative pre-16S rRNA nuclease (153 aa).

It belongs to the YqgF nuclease family.

The protein localises to the cytoplasm. Functionally, could be a nuclease involved in processing of the 5'-end of pre-16S rRNA. The protein is Putative pre-16S rRNA nuclease of Koribacter versatilis (strain Ellin345).